We begin with the raw amino-acid sequence, 252 residues long: Ribosomal RNA small subunit methyltransferase J (252 aa).

S-adenosyl-L-methionine contacts are provided by residues 101 to 102 (RD), 117 to 118 (ER), 153 to 154 (SS), and D171.

This sequence belongs to the methyltransferase superfamily. RsmJ family.

Its subcellular location is the cytoplasm. It catalyses the reaction guanosine(1516) in 16S rRNA + S-adenosyl-L-methionine = N(2)-methylguanosine(1516) in 16S rRNA + S-adenosyl-L-homocysteine + H(+). Its function is as follows. Specifically methylates the guanosine in position 1516 of 16S rRNA. The polypeptide is Ribosomal RNA small subunit methyltransferase J (Salmonella typhimurium (strain LT2 / SGSC1412 / ATCC 700720)).